Reading from the N-terminus, the 342-residue chain is MEEADLTLPLSQDTFHDLWNNVFLSTENESLAPPEGLLSQNMDFWEDPETMQETKNVPTAPTVPAISNYAGEHGFNLEFNDSGTAKSVTSTYSVKLGKLFCQLAKTTPIGVLVKEEPPQGAVIRATSVYKKTEHVGEVVKRCPHHQSEDLSDNKSHLIRVEGSQLAQYFEDPNTRRHSVTVPYERPQLGSEMTTILLSFMCNSSCMGGMNRRPILTILTLETTEGEVLGRRCFEVRVCACPGRDRKTEEGNLEKSGTKQTKKRKSAPAPDTSTAKKSKSASSGEDEDKEIYTLSIRGRNRYLWFKSLNDGLELMDKTGPKIKQEIPAPSSGKRLLKGGSDSD.

The transcription activation (acidic) stretch occupies residues 1 to 35 (MEEADLTLPLSQDTFHDLWNNVFLSTENESLAPPE). Residues 68-255 (NYAGEHGFNL…KTEEGNLEKS (188 aa)) mediate DNA binding. Zn(2+)-binding residues include Cys-142, His-145, Cys-201, and Cys-205. Positions 236–243 (RVCACPGR) are interaction with DNA. Residues 244 to 256 (DRKTEEGNLEKSG) are compositionally biased toward basic and acidic residues. A disordered region spans residues 244–287 (DRKTEEGNLEKSGTKQTKKRKSAPAPDTSTAKKSKSASSGEDED). The Bipartite nuclear localization signal signature appears at 261–278 (KKRKSAPAPDTSTAKKSK). Positions 271-282 (TSTAKKSKSASS) are enriched in low complexity. An oligomerization region spans residues 288–317 (KEIYTLSIRGRNRYLWFKSLNDGLELMDKT). Residues 302 to 313 (LWFKSLNDGLEL) carry the Nuclear export signal motif. The disordered stretch occupies residues 318 to 342 (GPKIKQEIPAPSSGKRLLKGGSDSD). Residues 319 to 336 (PKIKQEIPAPSSGKRLLK) form a basic (repression of DNA-binding) region.

The protein belongs to the p53 family. As to quaternary structure, binds DNA as a homotetramer. Requires Zn(2+) as cofactor.

The protein localises to the cytoplasm. Its subcellular location is the nucleus. In terms of biological role, multifunctional transcription factor that induces cell cycle arrest, DNA repair or apoptosis upon binding to its target DNA sequence. Acts as a tumor suppressor in many tumor types; induces growth arrest or apoptosis depending on the physiological circumstances and cell type. Negatively regulates cell division by controlling expression of a set of genes required for this process. One of the activated genes is an inhibitor of cyclin-dependent kinases. Apoptosis induction seems to be mediated either by stimulation of BAX and FAS antigen expression, or by repression of Bcl-2 expression. The sequence is that of Cellular tumor antigen p53 (tp53) from Xiphophorus hellerii (Green swordtail).